Here is a 652-residue protein sequence, read N- to C-terminus: Acetyl-coenzyme A synthetase (652 aa).

Residues 191-194, Thr-311, and Asn-335 contribute to the CoA site; that span reads RAGR. ATP is bound by residues 387–389, 411–416, Asp-500, and Arg-515; these read GEP and DTWWQT. Ser-523 provides a ligand contact to CoA. Arg-526 contacts ATP. Mg(2+) contacts are provided by Val-537, His-539, and Ile-542. Arg-584 is a binding site for CoA. Lys-609 is subject to N6-acetyllysine.

Belongs to the ATP-dependent AMP-binding enzyme family. The cofactor is Mg(2+). Post-translationally, acetylated. Deacetylation by the SIR2-homolog deacetylase activates the enzyme.

The catalysed reaction is acetate + ATP + CoA = acetyl-CoA + AMP + diphosphate. Catalyzes the conversion of acetate into acetyl-CoA (AcCoA), an essential intermediate at the junction of anabolic and catabolic pathways. Acs undergoes a two-step reaction. In the first half reaction, Acs combines acetate with ATP to form acetyl-adenylate (AcAMP) intermediate. In the second half reaction, it can then transfer the acetyl group from AcAMP to the sulfhydryl group of CoA, forming the product AcCoA. Functionally, enables the cell to use acetate during aerobic growth to generate energy via the TCA cycle, and biosynthetic compounds via the glyoxylate shunt. Acetylates CheY, the response regulator involved in flagellar movement and chemotaxis. In Salmonella typhi, this protein is Acetyl-coenzyme A synthetase.